We begin with the raw amino-acid sequence, 292 residues long: Acetylglutamate kinase (292 aa).

Substrate contacts are provided by residues 64-65 (GG), Arg86, and Asn190.

The protein belongs to the acetylglutamate kinase family. ArgB subfamily.

It localises to the cytoplasm. It catalyses the reaction N-acetyl-L-glutamate + ATP = N-acetyl-L-glutamyl 5-phosphate + ADP. The protein operates within amino-acid biosynthesis; L-arginine biosynthesis; N(2)-acetyl-L-ornithine from L-glutamate: step 2/4. Catalyzes the ATP-dependent phosphorylation of N-acetyl-L-glutamate. This is Acetylglutamate kinase from Citrifermentans bemidjiense (strain ATCC BAA-1014 / DSM 16622 / JCM 12645 / Bem) (Geobacter bemidjiensis).